Reading from the N-terminus, the 351-residue chain is Transcription factor bHLH93 (351 aa).

Positions 174-223 constitute a bHLH domain; it reads GQPSKNLMAERRRRKRLNDRLSMLRSIVPKISKMDRTSILGDAIDYMKEL.

As to quaternary structure, homodimer. Interacts with FAMA. As to expression, broadly expressed.

It is found in the nucleus. Transcription factor. May be involved in the differentiation of stomatal guard cells. The chain is Transcription factor bHLH93 (BHLH93) from Arabidopsis thaliana (Mouse-ear cress).